A 596-amino-acid chain; its full sequence is A-type ATP synthase subunit A (596 aa).

241–248 provides a ligand contact to ATP; that stretch reads GPFGSGKT.

The protein belongs to the ATPase alpha/beta chains family. As to quaternary structure, has multiple subunits with at least A(3), B(3), C, D, E, F, H, I and proteolipid K(x).

The protein localises to the cell membrane. The enzyme catalyses ATP + H2O + 4 H(+)(in) = ADP + phosphate + 5 H(+)(out). In terms of biological role, component of the A-type ATP synthase that produces ATP from ADP in the presence of a proton gradient across the membrane. The A chain is the catalytic subunit. This is A-type ATP synthase subunit A from Ignicoccus hospitalis (strain KIN4/I / DSM 18386 / JCM 14125).